We begin with the raw amino-acid sequence, 1207 residues long: Dermatan-sulfate epimerase-like protein (1207 aa).

The signal sequence occupies residues 1-22 (MAFMFTEHLLFLTLMMCSFSTC). N-linked (GlcNAc...) asparagine glycans are attached at residues Asn28, Asn661, Asn683, and Asn704. Transmembrane regions (helical) follow at residues 761 to 781 (FPFG…SLVI) and 798 to 818 (CVLI…WSTC). Asn869 carries N-linked (GlcNAc...) asparagine glycosylation.

This sequence belongs to the dermatan-sulfate isomerase family.

Its subcellular location is the membrane. The polypeptide is Dermatan-sulfate epimerase-like protein (Dsel) (Mus musculus (Mouse)).